Consider the following 413-residue polypeptide: Probable protein S-acyltransferase 3 (413 aa).

The next 2 membrane-spanning stretches (helical) occupy residues 65 to 85 and 96 to 116; these read LTSF…LVWI and VLAS…LTSA. In terms of domain architecture, DHHC spans 171–221; that stretch reads KFCDTCLLYRPPRASHCSICNNCVQRFDHHCPWVGQCIARRNYPFFICFIS. The active-site S-palmitoyl cysteine intermediate is Cys-201. The next 2 helical transmembrane spans lie at 216–236 and 255–275; these read FICF…FSWI and SVIL…LTIF. The tract at residues 364 to 413 is disordered; it reads RDSPRKLPLPTRNLDDIKDISDNYDRSTTTREDASDRDPSFFSSQLDLPK. Over residues 376-402 the composition is skewed to basic and acidic residues; the sequence is NLDDIKDISDNYDRSTTTREDASDRDP. Positions 404–413 are enriched in polar residues; sequence FFSSQLDLPK.

Belongs to the DHHC palmitoyltransferase family. Expressed in flowers and pollen.

Its subcellular location is the endoplasmic reticulum membrane. The protein localises to the cytoplasmic vesicle membrane. The enzyme catalyses L-cysteinyl-[protein] + hexadecanoyl-CoA = S-hexadecanoyl-L-cysteinyl-[protein] + CoA. Functionally, palmitoyl acyltransferase. This Arabidopsis thaliana (Mouse-ear cress) protein is Probable protein S-acyltransferase 3 (PAT03).